Reading from the N-terminus, the 95-residue chain is Citrate lyase acyl carrier protein (95 aa).

The residue at position 14 (serine 14) is an O-(phosphoribosyl dephospho-coenzyme A)serine.

The protein belongs to the CitD family. In terms of assembly, oligomer with a subunit composition of (alpha,beta,gamma)6.

Its subcellular location is the cytoplasm. Covalent carrier of the coenzyme of citrate lyase. The protein is Citrate lyase acyl carrier protein of Haemophilus influenzae (strain PittEE).